Consider the following 116-residue polypeptide: MIETAIYGKTVDDQSRCVHWHLPKDVIAIRFKCCDKYYACFECHQELSSHPLEKYDLLDDANKHLIICGVCRHEMTFAEYYDYNSNLICPNCRSPFNPGCKLHYHLYFQNPPPAMC.

The segment at 10–94 (TVDDQSRCVH…SNLICPNCRS (85 aa)) adopts a CHY-type; degenerate zinc-finger fold. Zn(2+)-binding residues include cysteine 17, histidine 19, cysteine 40, cysteine 43, cysteine 68, cysteine 71, cysteine 89, and cysteine 92.

As to quaternary structure, interacts with the small Tim proteins TIM8, TIM9, TIM10, TIM12, and TIM13.

It localises to the mitochondrion intermembrane space. The protein resides in the mitochondrion membrane. Required for the assembly or recycling of the small Tim proteins in the mitochondrial intermembrane, thereby participating in the import and insertion of multi-pass transmembrane proteins into the mitochondrial inner membrane. Probably acts by facilitating the formation of disulfide bonds in small Tim proteins. The protein is Helper of Tim protein 13 (HOT13) of Saccharomyces cerevisiae (strain ATCC 204508 / S288c) (Baker's yeast).